Reading from the N-terminus, the 938-residue chain is MSDYKSTLNLPETGFPMRGDLAKREPGMLARWTDDDLYGIIRAAKKGKKTFILHDGPPYANGSIHIGHSVNKILKDIIVKSKGLSGYDSPYVPGWDCHGLPIELKVEQEYGKPGEKFTAAEFRAKCREYAATQVDGQRKDFIRLGVLGDWSHPYLTMDFKTEANIIRALGKIIGNGHLHKGAKPVHWCVDCRSALAEAEVEYYDKTSPSIDVAFQAVDQDALKAKFAVSNVNGPISLVIWTTTPWTLPANRAISIAPDFDYALVQIDGQAVILAKDLVESVMQRIGVTDYTILGTVKGAELELLRFTHPFMGFDVPAILGDHVTLDAGTGAVHTAPGHGPDDYVIGQKYGLETANPVGPDGTYLPGTYPTLDGVNVFKANDIVVALLQEKGALLHVEKMQHSYPCCWRHKTPIIFRATPQWFVSMDQKGLRAQSLKEIKGVQWIPDWGQARIESMVANRPDWCISRQRTWGVPMSLFVHKDTEELHPRTLELMEEVAKRVEVDGIQAWWDLDAKEILGDEADQYVKVPDTLDVWFDSGSTHFSVVDVRPEFAGHAADMYLEGSDQHRGWFMSSLMISTAMKGKAPYRQVLTHGFTVDGQGRKMSKSIGNTVSPQDVMNKLGADILRLWVASTDYTGEMAVSDEILKRAADSYRRIRNTARFLLANLNGFDPAKDMVKPEEMVVLDRWAVGCAKAAQEDILKAYEAYDFHEVVQRLMRFCSVEMGSFYLDIIKDRQYTAKADSVARRSCQTALYHIAEALVRWMAPILSFTADEVWGYLPGEREKYVFTGEWYEGLFGLADSEAMNDAFWDELLKVRGEVNKVIEQARADKKVGGSLEAAVTLYAEPELAAKLTALGDELRFVLLTSGATVADYHDAPADAQQSEVLKGLKVALSKAEGEKCPRCWHYTQDVGKVAEHAEICGRCVSNVAGDGEKRKFA.

Positions 58–68 (PYANGSIHIGH) match the 'HIGH' region motif. The residue at position 183 (K183) is an N6-acetyllysine. Residue E561 coordinates L-isoleucyl-5'-AMP. Residues 602–606 (KMSKS) carry the 'KMSKS' region motif. Residue K605 coordinates ATP. Zn(2+)-binding residues include C901, C904, C921, and C924.

This sequence belongs to the class-I aminoacyl-tRNA synthetase family. IleS type 1 subfamily. In terms of assembly, monomer. Requires Zn(2+) as cofactor.

It localises to the cytoplasm. The catalysed reaction is tRNA(Ile) + L-isoleucine + ATP = L-isoleucyl-tRNA(Ile) + AMP + diphosphate. Its function is as follows. Catalyzes the attachment of isoleucine to tRNA(Ile). As IleRS can inadvertently accommodate and process structurally similar amino acids such as valine, to avoid such errors it has two additional distinct tRNA(Ile)-dependent editing activities. One activity is designated as 'pretransfer' editing and involves the hydrolysis of activated Val-AMP. The other activity is designated 'posttransfer' editing and involves deacylation of mischarged Val-tRNA(Ile). This Shigella boydii serotype 4 (strain Sb227) protein is Isoleucine--tRNA ligase.